The sequence spans 324 residues: Succinylglutamate desuccinylase (324 aa).

His53, Glu56, and His148 together coordinate Zn(2+). The active site involves Glu211.

Belongs to the AspA/AstE family. Succinylglutamate desuccinylase subfamily. Zn(2+) serves as cofactor.

It carries out the reaction N-succinyl-L-glutamate + H2O = L-glutamate + succinate. It functions in the pathway amino-acid degradation; L-arginine degradation via AST pathway; L-glutamate and succinate from L-arginine: step 5/5. Functionally, transforms N(2)-succinylglutamate into succinate and glutamate. In Acinetobacter baumannii (strain AB0057), this protein is Succinylglutamate desuccinylase.